A 96-amino-acid chain; its full sequence is Large ribosomal subunit protein bL27 (96 aa).

A propeptide spanning residues 1–9 (MLRLDLQFF) is cleaved from the precursor.

Belongs to the bacterial ribosomal protein bL27 family. Post-translationally, the N-terminus is cleaved by ribosomal processing cysteine protease Prp.

The polypeptide is Large ribosomal subunit protein bL27 (Geobacillus sp. (strain WCH70)).